The chain runs to 174 residues: B3 domain-containing protein At2g31862 (174 aa).

The TF-B3 DNA-binding region spans 1–71; that stretch reads MWVNLSCMCH…KLYIALVPLD (71 aa).

It localises to the nucleus. In Arabidopsis thaliana (Mouse-ear cress), this protein is B3 domain-containing protein At2g31862.